A 239-amino-acid chain; its full sequence is tRNA (guanine-N(7)-)-methyltransferase (239 aa).

S-adenosyl-L-methionine contacts are provided by E69, E94, D121, and D144. D144 is an active-site residue. K148 provides a ligand contact to substrate. An interaction with RNA region spans residues 150–155 (RHNKRR). Residues D180 and 217 to 220 (TKFE) each bind substrate.

It belongs to the class I-like SAM-binding methyltransferase superfamily. TrmB family. As to quaternary structure, monomer.

The enzyme catalyses guanosine(46) in tRNA + S-adenosyl-L-methionine = N(7)-methylguanosine(46) in tRNA + S-adenosyl-L-homocysteine. It participates in tRNA modification; N(7)-methylguanine-tRNA biosynthesis. Functionally, catalyzes the formation of N(7)-methylguanine at position 46 (m7G46) in tRNA. This is tRNA (guanine-N(7)-)-methyltransferase from Salmonella typhi.